A 374-amino-acid chain; its full sequence is Wnt inhibitory factor 1 (374 aa).

A signal peptide spans 1–28 (MSLTGYFAAPLCSIFLFILAHADAGQQE). One can recognise a WIF domain in the interval 33 to 172 (MWIDAHQARV…PQNAIFFKTC (140 aa)). Asn-83 carries N-linked (GlcNAc...) asparagine glycosylation. Cystine bridges form between Cys-135/Cys-172, Cys-177/Cys-187, Cys-181/Cys-193, Cys-195/Cys-204, Cys-209/Cys-219, Cys-213/Cys-225, and Cys-227/Cys-236. EGF-like domains are found at residues 173 to 205 (QQAKCTGGCRNGGFCNDRHVCECPDGFYGPHCE), 208 to 237 (LCMPRCMNGGLCVTPGLCICPPGYYGINCD), 237 to 269 (DKVNCTTHCLNGGTCFYPGKCICPSGYEGEQCE), 270 to 301 (TSKCQQPCRNGGKCSGKNKCKCSKGYQGDLCS), and 302 to 333 (KPVCEPSCGAHGTCIEPNKCQCKEGWNGRYCN). A glycan (N-linked (GlcNAc...) asparagine) is linked at Asn-240. 9 disulfide bridges follow: Cys-241–Cys-251, Cys-245–Cys-257, Cys-259–Cys-268, Cys-273–Cys-283, Cys-277–Cys-289, Cys-291–Cys-300, Cys-305–Cys-315, Cys-309–Cys-321, and Cys-323–Cys-332. The tract at residues 343–374 (ALRPTGSRNRQHTPSPKRTEDRQALPESNYIW) is disordered. Over residues 348 to 358 (GSRNRQHTPSP) the composition is skewed to polar residues.

As to expression, during somatogenesis, expressed predominantly in unsegmented paraxial presomitic mesoderm and, to a much lesser extent, in newly segmented somites.

The protein localises to the secreted. Its function is as follows. Binds to WNT proteins and inhibits their activities. May be involved in mesoderm segmentation. This chain is Wnt inhibitory factor 1 (wif1), found in Xenopus laevis (African clawed frog).